The primary structure comprises 562 residues: Cell division protein FtsZ (562 aa).

Residues 23 to 27 (GAGGN), 110 to 112 (GTG), glutamate 141, arginine 145, and aspartate 189 each bind GTP. Positions 404 to 413 (PAAARPAQQP) are enriched in low complexity. 2 disordered regions span residues 404 to 428 (PAAA…RLDP) and 462 to 562 (ETAQ…RQAN). The span at 418–428 (FRPDPQLRLDP) shows a compositional bias: basic and acidic residues. 2 stretches are compositionally biased toward low complexity: residues 464-486 (AQAA…QPQR) and 500-510 (GLLRRPAAAQP).

The protein belongs to the FtsZ family. In terms of assembly, homodimer. Polymerizes to form a dynamic ring structure in a strictly GTP-dependent manner. Interacts directly with several other division proteins. Interacts with FtsZ-like protein (also called FtsZm).

The protein localises to the cytoplasm. Its function is as follows. Essential cell division protein that forms a contractile ring structure (Z ring) at the future cell division site. The regulation of the ring assembly controls the timing and the location of cell division. One of the functions of the FtsZ ring is to recruit other cell division proteins to the septum to produce a new cell wall between the dividing cells. Binds GTP and shows GTPase activity. Mild overexpression impairs cell division, leading to very elongated cells. Isolated protein forms filaments and bundles in the presence of GTP. The sequence is that of Cell division protein FtsZ from Magnetospirillum gryphiswaldense (strain DSM 6361 / JCM 21280 / NBRC 15271 / MSR-1).